The primary structure comprises 154 residues: Protein FAM162A (154 aa).

Residues 76 to 102 (RFKKEDEIPETVSLEMLDTAKNKMRVK) are required for proapoptotic activity. The chain crosses the membrane as a helical span at residues 103–120 (ISYLMIALTVVGCICMVI).

It belongs to the UPF0389 family. Interacts with HSP90AB1; HSP90AB1 is essential for FAM162A mitochondrial localization and pro-apoptotic activity. Interacts with VDAC2; the interaction is probably involved in inducing mitochondrial permeability transition.

It is found in the mitochondrion membrane. Its function is as follows. Proposed to be involved in regulation of apoptosis; the exact mechanism may differ between cell types/tissues. May be involved in hypoxia-induced cell death of transformed cells implicating cytochrome C release and caspase activation (such as CASP9) and inducing mitochondrial permeability transition. May be involved in hypoxia-induced cell death of neuronal cells probably by promoting release of AIFM1 from mitochondria to cytoplasm and its translocation to the nucleus; however, the involvement of caspases has been reported conflictingly. This is Protein FAM162A (FAM162A) from Pongo abelii (Sumatran orangutan).